We begin with the raw amino-acid sequence, 234 residues long: MEGGAYGAGKAGGAFDPYTLVRQPHTILRVVSWVFSIVVFGSIVNEGYLNNPEEEEEFCIYNRNPNACSYGVTVGVLAFLTCLVYLALDVYFPQISSVKDRKKAVLSDIGVSAFWAFFWFVGFCFLANQWQVSKPKDNPLNEGTDAARAAIAFSFFSIFTWAGQAVLAFQRYQIGADSALFSQDYMDPSQDSSMPYAPYVEPSAGSDPTGMGGTYQHPANAFDAEPQGYQSQGY.

M1 is subject to N-acetylmethionine. Residues M1–Q23 lie on the Cytoplasmic side of the membrane. One can recognise an MARVEL domain in the interval L20–Q173. The helical transmembrane segment at P24–V44 threads the bilayer. Residues N45–G71 lie on the Lumenal side of the membrane. The chain crosses the membrane as a helical span at residues V72–F92. Over P93–A104 the chain is Cytoplasmic. The helical transmembrane segment at V105 to F125 threads the bilayer. The Lumenal segment spans residues L126 to R148. A helical membrane pass occupies residues A149–F169. The Cytoplasmic segment spans residues Q170–Y234. Residues E201–Y234 form a disordered region.

Belongs to the synaptogyrin family. As to expression, nervous system (at protein level).

It localises to the cytoplasmic vesicle. The protein localises to the secretory vesicle. Its subcellular location is the synaptic vesicle membrane. The protein resides in the melanosome. In terms of biological role, may play a role in regulated exocytosis. Modulates the localization of synaptophysin/SYP into synaptic-like microvesicles and may therefore play a role in synaptic-like microvesicle formation and/or maturation. Involved in the regulation of short-term and long-term synaptic plasticity. This chain is Synaptogyrin-1, found in Rattus norvegicus (Rat).